Consider the following 483-residue polypeptide: MTQKLESVGSERKSSEYMWDDGSEHDDVTKIYVRGGTKGIEFIKFGYVKAGELLDGSFHGYSDTGFTQMFEIDHRKNEHLLSVEGYFDYYNDIMYAIQFKTNLKISEIMGYEYSGHKFTLAMEGKKIIGFHGFADVNLRALGAYVTWITPARMEAKGGKGGNEWDDGGDYEAVTKIHGRSDHKGIKDIIFDYVDKDGHPKSETHGPTSGQGYVLEPFEINHLDKEYLMSIDGYYDDASGVIQALQFKTNMKTSELMGYYDDDAVKFTIGCTVNKIIGFHGHAGKNLYSLGAYFTTLPLTKLEYEDSFREKLPKNGASGNLWDDGSFQGVKKVHIYYDGYSVRCVRFDYDDDGKVESREHGPKIVAAVQEGGFVLDYPNEVITSVEGIATVVNTGLSFSTGNVMIKSLTFKTSKGRTSPTFGNVFGNYLSEFKLESQGCAIVGFHGRSSYNSIHGLGAYFFPMPPSHDGKALEEQGGDGGLGGV.

Residues 1 to 20 (MTQKLESVGSERKSSEYMWD) are disordered. 3 Jacalin-type lectin domains span residues 2–147 (TQKL…YVTW), 150–295 (PARM…YFTT), and 307–461 (FREK…YFFP).

This sequence belongs to the jacalin lectin family.

In Arabidopsis thaliana (Mouse-ear cress), this protein is Jacalin-related lectin 13 (JAL13).